Here is a 433-residue protein sequence, read N- to C-terminus: Apolipoprotein L5 (433 aa).

A disordered region spans residues 346–433; the sequence is HHRHLPQKAS…GRQAPGRHRQ (88 aa). Over residues 359–371 the composition is skewed to low complexity; sequence SSSRGRAVRGSRV. A compositionally biased stretch (basic residues) spans 422–433; it reads RKGRQAPGRHRQ.

It belongs to the apolipoprotein L family. Low level of expression; detected in uterus, testis, skeletal muscle and stomach.

It is found in the cytoplasm. In terms of biological role, may affect the movement of lipids in the cytoplasm or allow the binding of lipids to organelles. This chain is Apolipoprotein L5 (APOL5), found in Homo sapiens (Human).